The chain runs to 801 residues: Probable inorganic carbon transporter subunit DabA (801 aa).

4 residues coordinate Zn(2+): C330, D332, H489, and C504.

This sequence belongs to the inorganic carbon transporter (TC 9.A.2) DabA family. As to quaternary structure, forms a complex with DabB. Zn(2+) is required as a cofactor.

Its subcellular location is the cell inner membrane. In terms of biological role, part of an energy-coupled inorganic carbon pump. The protein is Probable inorganic carbon transporter subunit DabA of Jannaschia sp. (strain CCS1).